The sequence spans 631 residues: Phosphomethylpyrimidine synthase (631 aa).

Substrate-binding positions include Asn-239, Met-268, Tyr-297, His-333, Ser-353–Gly-355, Asp-394–Arg-397, and Glu-433. Residue His-437 participates in Zn(2+) binding. Tyr-460 is a substrate binding site. His-501 serves as a coordination point for Zn(2+). [4Fe-4S] cluster-binding residues include Cys-581, Cys-584, and Cys-589.

The protein belongs to the ThiC family. In terms of assembly, homodimer. [4Fe-4S] cluster serves as cofactor.

The enzyme catalyses 5-amino-1-(5-phospho-beta-D-ribosyl)imidazole + S-adenosyl-L-methionine = 4-amino-2-methyl-5-(phosphooxymethyl)pyrimidine + CO + 5'-deoxyadenosine + formate + L-methionine + 3 H(+). It functions in the pathway cofactor biosynthesis; thiamine diphosphate biosynthesis. In terms of biological role, catalyzes the synthesis of the hydroxymethylpyrimidine phosphate (HMP-P) moiety of thiamine from aminoimidazole ribotide (AIR) in a radical S-adenosyl-L-methionine (SAM)-dependent reaction. The protein is Phosphomethylpyrimidine synthase of Salmonella heidelberg (strain SL476).